Reading from the N-terminus, the 248-residue chain is Ribosomal RNA small subunit methyltransferase G (248 aa).

Residues G85, F90, 137 to 138, and R156 each bind S-adenosyl-L-methionine; that span reads IE.

It belongs to the methyltransferase superfamily. RNA methyltransferase RsmG family.

It localises to the cytoplasm. Functionally, specifically methylates the N7 position of a guanine in 16S rRNA. The protein is Ribosomal RNA small subunit methyltransferase G of Parasynechococcus marenigrum (strain WH8102).